The sequence spans 446 residues: MTEQKKKLEKLSGVKGMNDILPQEAGLWEFFETTVKSMLRSYGYQNIRTPIVEHTQLFKRGIGEVTDIVEKEMYSFTDALNGENLTMRPENTAAVVRAAIEHNMLYDGPKRLWYIGPMFRHERPQRGRYRQFHQVGVEALGFAGPDADAEIIMMCQRLWDDLGLMGIKLEINSLGLAEERAAHRVELIAHLEKHMDVLDEEAKRRLYTNPLRVLDTKNPAMQEVAQNAPKLIDFLGEESRAHFEGLQRILKANNIPFTINPRLVRGLDYYNLTVFEWVTDKLGAQGTVAAGGRYDPLIEQLGGKPTAACGWAMGIERILELLKEEQLVPEDEGCDVYVVHQGDAAREQAFIIAERLRDTGLDVILHCSADGQTASFKSQMKRADASGAAFAVVLGEDEIANGTVGVKPLRDTNANGGKNEQQNVPAEDLTEFLINAMVATAEDGDD.

It belongs to the class-II aminoacyl-tRNA synthetase family. In terms of assembly, homodimer.

Its subcellular location is the cytoplasm. The catalysed reaction is tRNA(His) + L-histidine + ATP = L-histidyl-tRNA(His) + AMP + diphosphate + H(+). The protein is Histidine--tRNA ligase of Paraburkholderia phytofirmans (strain DSM 17436 / LMG 22146 / PsJN) (Burkholderia phytofirmans).